A 109-amino-acid polypeptide reads, in one-letter code: ATP-dependent Clp protease adapter protein ClpS (109 aa).

Belongs to the ClpS family. In terms of assembly, binds to the N-terminal domain of the chaperone ClpA.

Involved in the modulation of the specificity of the ClpAP-mediated ATP-dependent protein degradation. In Lawsonia intracellularis (strain PHE/MN1-00), this protein is ATP-dependent Clp protease adapter protein ClpS.